Here is a 267-residue protein sequence, read N- to C-terminus: Meiosis-specific protein ISC10 (267 aa).

Over residues 1-13 (MDVDERLHQDENQ) the composition is skewed to basic and acidic residues. The tract at residues 1-26 (MDVDERLHQDENQTHPFSQKKSSSFL) is disordered. Polar residues predominate over residues 14–25 (THPFSQKKSSSF).

Its function is as follows. Indispensable for spore formation. In Saccharomyces cerevisiae (strain ATCC 204508 / S288c) (Baker's yeast), this protein is Meiosis-specific protein ISC10 (ISC10).